Consider the following 481-residue polypeptide: Aspartyl/glutamyl-tRNA(Asn/Gln) amidotransferase subunit B (481 aa).

Belongs to the GatB/GatE family. GatB subfamily. As to quaternary structure, heterotrimer of A, B and C subunits.

It catalyses the reaction L-glutamyl-tRNA(Gln) + L-glutamine + ATP + H2O = L-glutaminyl-tRNA(Gln) + L-glutamate + ADP + phosphate + H(+). The enzyme catalyses L-aspartyl-tRNA(Asn) + L-glutamine + ATP + H2O = L-asparaginyl-tRNA(Asn) + L-glutamate + ADP + phosphate + 2 H(+). Functionally, allows the formation of correctly charged Asn-tRNA(Asn) or Gln-tRNA(Gln) through the transamidation of misacylated Asp-tRNA(Asn) or Glu-tRNA(Gln) in organisms which lack either or both of asparaginyl-tRNA or glutaminyl-tRNA synthetases. The reaction takes place in the presence of glutamine and ATP through an activated phospho-Asp-tRNA(Asn) or phospho-Glu-tRNA(Gln). In Pseudomonas savastanoi pv. phaseolicola (strain 1448A / Race 6) (Pseudomonas syringae pv. phaseolicola (strain 1448A / Race 6)), this protein is Aspartyl/glutamyl-tRNA(Asn/Gln) amidotransferase subunit B.